Here is a 429-residue protein sequence, read N- to C-terminus: Bifunctional protein GlmU (429 aa).

The segment at 1–223 (MKTSILILAA…EDEFMGINDK (223 aa)) is pyrophosphorylase. UDP-N-acetyl-alpha-D-glucosamine is bound by residues 8–11 (LAAG), lysine 22, and 81–82 (GT). Aspartate 102 is a Mg(2+) binding site. Positions 135, 149, 164, and 221 each coordinate UDP-N-acetyl-alpha-D-glucosamine. Asparagine 221 is a binding site for Mg(2+). The tract at residues 224-244 (FELSIAENFMQEKIKKYWMQQ) is linker. The segment at 245 to 429 (GVIFHLPQST…KDYYYKKFQK (185 aa)) is N-acetyltransferase. The UDP-N-acetyl-alpha-D-glucosamine site is built by arginine 308 and lysine 325. Histidine 336 acts as the Proton acceptor in catalysis. Residues tyrosine 339 and asparagine 350 each contribute to the UDP-N-acetyl-alpha-D-glucosamine site. Residues 359–360 (NY), serine 378, alanine 396, and arginine 413 each bind acetyl-CoA.

This sequence in the N-terminal section; belongs to the N-acetylglucosamine-1-phosphate uridyltransferase family. The protein in the C-terminal section; belongs to the transferase hexapeptide repeat family. As to quaternary structure, homotrimer. Mg(2+) serves as cofactor.

Its subcellular location is the cytoplasm. It catalyses the reaction alpha-D-glucosamine 1-phosphate + acetyl-CoA = N-acetyl-alpha-D-glucosamine 1-phosphate + CoA + H(+). The catalysed reaction is N-acetyl-alpha-D-glucosamine 1-phosphate + UTP + H(+) = UDP-N-acetyl-alpha-D-glucosamine + diphosphate. It participates in nucleotide-sugar biosynthesis; UDP-N-acetyl-alpha-D-glucosamine biosynthesis; N-acetyl-alpha-D-glucosamine 1-phosphate from alpha-D-glucosamine 6-phosphate (route II): step 2/2. It functions in the pathway nucleotide-sugar biosynthesis; UDP-N-acetyl-alpha-D-glucosamine biosynthesis; UDP-N-acetyl-alpha-D-glucosamine from N-acetyl-alpha-D-glucosamine 1-phosphate: step 1/1. The protein operates within bacterial outer membrane biogenesis; LPS lipid A biosynthesis. In terms of biological role, catalyzes the last two sequential reactions in the de novo biosynthetic pathway for UDP-N-acetylglucosamine (UDP-GlcNAc). The C-terminal domain catalyzes the transfer of acetyl group from acetyl coenzyme A to glucosamine-1-phosphate (GlcN-1-P) to produce N-acetylglucosamine-1-phosphate (GlcNAc-1-P), which is converted into UDP-GlcNAc by the transfer of uridine 5-monophosphate (from uridine 5-triphosphate), a reaction catalyzed by the N-terminal domain. The chain is Bifunctional protein GlmU from Campylobacter jejuni subsp. jejuni serotype O:6 (strain 81116 / NCTC 11828).